Reading from the N-terminus, the 61-residue chain is Sec-independent protein translocase protein TatA (61 aa).

The helical transmembrane segment at 1–21 threads the bilayer; that stretch reads MFGIGMPEMLIILVIILIIFG.

Belongs to the TatA/E family. In terms of assembly, the Tat system comprises two distinct complexes: a TatABC complex, containing multiple copies of TatA, TatB and TatC subunits, and a separate TatA complex, containing only TatA subunits. Substrates initially bind to the TatABC complex, which probably triggers association of the separate TatA complex to form the active translocon.

The protein resides in the cell inner membrane. Part of the twin-arginine translocation (Tat) system that transports large folded proteins containing a characteristic twin-arginine motif in their signal peptide across membranes. TatA could form the protein-conducting channel of the Tat system. The sequence is that of Sec-independent protein translocase protein TatA from Syntrophus aciditrophicus (strain SB).